The following is an 82-amino-acid chain: Turripeptide IX-23 (82 aa).

A signal peptide spans 1 to 23; that stretch reads MMAKLMITVMMVLLLSLQQGADG. The propeptide occupies 24-50; sequence RSERWRKNQMAASSIMRNLITARIDPP. 3 cysteine pairs are disulfide-bonded: Cys53-Cys68, Cys58-Cys72, and Cys64-Cys79.

The protein belongs to the Pg turripeptide superfamily. As to expression, expressed by the venom duct.

The protein resides in the secreted. This chain is Turripeptide IX-23, found in Gemmula speciosa (Splendid gem-turris).